A 340-amino-acid chain; its full sequence is Glycerol-3-phosphate dehydrogenase [NAD(P)+] (340 aa).

Residues Ser-11, Trp-12, Arg-33, and Lys-106 each contribute to the NADPH site. Positions 106, 137, and 139 each coordinate sn-glycerol 3-phosphate. Residue Ala-141 participates in NADPH binding. Sn-glycerol 3-phosphate contacts are provided by Lys-192, Asp-245, Ser-255, Arg-256, and Asn-257. The active-site Proton acceptor is Lys-192. Arg-256 lines the NADPH pocket. Residues Val-280 and Glu-282 each contribute to the NADPH site.

This sequence belongs to the NAD-dependent glycerol-3-phosphate dehydrogenase family.

The protein localises to the cytoplasm. The enzyme catalyses sn-glycerol 3-phosphate + NAD(+) = dihydroxyacetone phosphate + NADH + H(+). The catalysed reaction is sn-glycerol 3-phosphate + NADP(+) = dihydroxyacetone phosphate + NADPH + H(+). It functions in the pathway membrane lipid metabolism; glycerophospholipid metabolism. Its function is as follows. Catalyzes the reduction of the glycolytic intermediate dihydroxyacetone phosphate (DHAP) to sn-glycerol 3-phosphate (G3P), the key precursor for phospholipid synthesis. This Bacillus cereus (strain B4264) protein is Glycerol-3-phosphate dehydrogenase [NAD(P)+].